Reading from the N-terminus, the 359-residue chain is Type-1 angiotensin II receptor (359 aa).

Residues 1 to 25 (MVPNYSTEETVKRIHVDCPVSGRHS) lie on the Extracellular side of the membrane. Asn-4 carries an N-linked (GlcNAc...) asparagine glycan. Residue Asp-17 participates in angiotensin II binding. Cystine bridges form between Cys-18–Cys-274 and Cys-101–Cys-180. The helical transmembrane segment at 26–55 (YIYIMVPTVYSIIFIIGIFGNSLVVIVIYC) threads the bilayer. Residues 56-61 (YMKLKT) lie on the Cytoplasmic side of the membrane. The helical transmembrane segment at 62-89 (VASIFLLNLALADLCFLITLPLWAAYTA) threads the bilayer. The Extracellular segment spans residues 90 to 98 (MEYQWPFGN). A helical membrane pass occupies residues 99–125 (CLCKLASAGISFNLYASVFLLTCLSID). Over 126–141 (RYLAIVHPVKSRIRRT) the chain is Cytoplasmic. The chain crosses the membrane as a helical span at residues 142–165 (MFVARVTCIVIWLLAGVASLPVII). Residues 166 to 190 (HRNIFFAENLNMTVCGFRYDNNNTT) are Extracellular-facing. An angiotensin II-binding site is contributed by Arg-167. N-linked (GlcNAc...) asparagine glycosylation is present at Asn-176. Angiotensin II contacts are provided by Phe-182 and Tyr-184. N-linked (GlcNAc...) asparagine glycans are attached at residues Asn-187 and Asn-188. A helical transmembrane segment spans residues 191-216 (LRVGLGLSKNLLGFLIPFLIILTSYT). Lys-199 contacts angiotensin II. Topologically, residues 217 to 239 (LIWKTLKKAYQIQRNKTRNDDIF) are cytoplasmic. Residues 240–268 (KMIVAIVFFFFFSWIPHQVFTFLDVLIQL) form a helical membrane-spanning segment. Over 269–278 (HVITDCKITD) the chain is Extracellular. A helical membrane pass occupies residues 279–304 (IVDTAMPFTICIAYFNNCLNPFFYVF). The Cytoplasmic portion of the chain corresponds to 305-359 (FGKNFKKYFLQLIKYIPPNVSTHPSLTTKMSSLSYRPPENIRLPTKKTAGSFDTE).

This sequence belongs to the G-protein coupled receptor 1 family. In terms of processing, C-terminal Ser or Thr residues may be phosphorylated. As to expression, adrenal medulla.

It localises to the cell membrane. Its function is as follows. Receptor for angiotensin II, a vasoconstricting peptide, which acts as a key regulator of blood pressure and sodium retention by the kidney. The activated receptor in turn couples to G-alpha proteins G(q) (GNAQ, GNA11, GNA14 or GNA15) and thus activates phospholipase C and increases the cytosolic Ca(2+) concentrations, which in turn triggers cellular responses such as stimulation of protein kinase C. The sequence is that of Type-1 angiotensin II receptor (AGTR1) from Meleagris gallopavo (Wild turkey).